The primary structure comprises 253 residues: Tetraspanin-3 (253 aa).

Residues 1-11 lie on the Cytoplasmic side of the membrane; it reads MGQCGITSSKT. Residues 12–32 traverse the membrane as a helical segment; it reads VLVFLNLIFWGAAGILCYVGA. The Extracellular segment spans residues 33 to 50; it reads YVFITYDDYDHFFEDVYT. The chain crosses the membrane as a helical span at residues 51 to 71; the sequence is LIPAVVIIAVGALLFIIGLIG. Residues 72–85 lie on the Cytoplasmic side of the membrane; it reads CCATIRESRCGLAT. The helical transmembrane segment at 86 to 106 threads the bilayer; it reads FVIILLLVFVTEVVVVVLGYV. Over 107-212 the chain is Extracellular; sequence YRAKVENEVD…KKLQEIMMHV (106 aa). N-linked (GlcNAc...) asparagine glycosylation is found at asparagine 127, asparagine 152, asparagine 167, and asparagine 183. The helical transmembrane segment at 213–233 threads the bilayer; it reads IWAALAFAAIQLLGMLCACIV. Topologically, residues 234–253 are cytoplasmic; the sequence is LCRRSRDPAYELLITGGTYA.

It belongs to the tetraspanin (TM4SF) family. In terms of assembly, interacts with claudin-11/CLDN11 and integrins.

It localises to the membrane. Regulates the proliferation and migration of oligodendrocytes, a process essential for normal myelination and repair. This Homo sapiens (Human) protein is Tetraspanin-3 (TSPAN3).